Reading from the N-terminus, the 1278-residue chain is Alpha-glucan water dikinase 2 (1278 aa).

An N-terminal signal peptide occupies residues 1–23 (MATSKSQQFQLIEGMELQITVTG). The active-site Tele-phosphohistidine intermediate is His-886.

This sequence belongs to the PEP-utilizing enzyme family. Homodimer. The cofactor is Mg(2+).

The catalysed reaction is [(1-&gt;4)-alpha-D-glucosyl](n) + n ATP + n H2O = [(1-&gt;4)-6-phospho-alpha-D-glucosyl](n) + n AMP + n phosphate + 2n H(+). Mediates the incorporation of phosphate into alpha-glucan, mostly at the C-6 position of glucose units. The sequence is that of Alpha-glucan water dikinase 2 (GWD2) from Arabidopsis thaliana (Mouse-ear cress).